A 453-amino-acid chain; its full sequence is Septin-10 (453 aa).

The interval 18-43 (KTAHTSSQVSDHEQKQKDSPRSLTMS) is disordered. Basic and acidic residues predominate over residues 27-37 (SDHEQKQKDSP). The Septin-type G domain occupies 62 to 328 (QGFCFNILCV…ELYRRRKLEE (267 aa)). The G1 motif stretch occupies residues 72–79 (GETGIGKS). GTP is bound by residues 72–79 (GETGIGKS), G127, 208–216 (KADAISKTE), G262, and R277. The segment at 124–127 (NTVG) is G3 motif. A G4 motif region spans residues 207 to 210 (AKAD). The disordered stretch occupies residues 433-453 (TFMTPGSNLRKDKDRKNSNFM). The segment covering 441-453 (LRKDKDRKNSNFM) has biased composition (basic and acidic residues).

This sequence belongs to the TRAFAC class TrmE-Era-EngA-EngB-Septin-like GTPase superfamily. Septin GTPase family. In terms of assembly, septins polymerize into heterooligomeric protein complexes that form filaments, and can associate with cellular membranes, actin filaments and microtubules. GTPase activity is required for filament formation. Interacts with ADGB. Proteolytically cleaved in vitro in a calmodulin-dependent manner.

The protein localises to the cytoplasm. The protein resides in the cytoskeleton. It is found in the cell projection. Its subcellular location is the cilium. It localises to the flagellum. Filament-forming cytoskeletal GTPase. May play a role in cytokinesis (Potential). The chain is Septin-10 from Bos taurus (Bovine).